The primary structure comprises 177 residues: Adenine phosphoribosyltransferase (177 aa).

This sequence belongs to the purine/pyrimidine phosphoribosyltransferase family. As to quaternary structure, homodimer.

Its subcellular location is the cytoplasm. The enzyme catalyses AMP + diphosphate = 5-phospho-alpha-D-ribose 1-diphosphate + adenine. Its pathway is purine metabolism; AMP biosynthesis via salvage pathway; AMP from adenine: step 1/1. Its function is as follows. Catalyzes a salvage reaction resulting in the formation of AMP, that is energically less costly than de novo synthesis. The chain is Adenine phosphoribosyltransferase from Chlorobaculum parvum (strain DSM 263 / NCIMB 8327) (Chlorobium vibrioforme subsp. thiosulfatophilum).